We begin with the raw amino-acid sequence, 65 residues long: Large ribosomal subunit protein bL35 (65 aa).

The protein belongs to the bacterial ribosomal protein bL35 family.

In Blochmanniella pennsylvanica (strain BPEN), this protein is Large ribosomal subunit protein bL35.